We begin with the raw amino-acid sequence, 706 residues long: Double-strand break repair protein MRE11 (706 aa).

Ser-2 is subject to N-acetylserine. Ser-2 is modified (phosphoserine). 3 residues coordinate Mn(2+): Asp-20, His-22, and Asp-60. The tract at residues 87–117 (RPVQFEVISDQSVNFGFSKFPWVNYQDGNLN) is interaction with NBN. Residue Asn-128 participates in Mn(2+) binding. The active-site Proton donor is His-129. Positions 217, 245, and 247 each coordinate Mn(2+). A Glycyl lysine isopeptide (Lys-Gly) (interchain with G-Cter in SUMO2) cross-link involves residue Lys-255. Residue Ser-275 is modified to Phosphoserine. Residue Lys-282 forms a Glycyl lysine isopeptide (Lys-Gly) (interchain with G-Cter in UFM1) linkage. A Glycyl lysine isopeptide (Lys-Gly) (interchain with G-Cter in ubiquitin) cross-link involves residue Lys-339. Glycyl lysine isopeptide (Lys-Gly) (interchain with G-Cter in SUMO) cross-links involve residues Lys-384 and Lys-468. Lys-481 is covalently cross-linked (Glycyl lysine isopeptide (Lys-Gly) (interchain with G-Cter in ubiquitin)). The span at 505–514 (FRESRQRNTN) shows a compositional bias: basic and acidic residues. Positions 505 to 706 (FRESRQRNTN…SSSCPRRNRR (202 aa)) are disordered. The span at 531–541 (RSQSETSTSAF) shows a compositional bias: polar residues. Basic residues predominate over residues 569-579 (GRGRGRGRRGA). Arg-570, Arg-572, Arg-574, Arg-576, Arg-577, Arg-580, Arg-587, Arg-592, and Arg-594 each carry asymmetric dimethylarginine. A GAR motif is present at residues 570 to 594 (RGRGRGRRGARGQSSAPRGGSQRGR). Positions 580-589 (RGQSSAPRGG) are enriched in low complexity. Residues 603–617 (RGRSSKATSSTSRNM) show a composition bias toward polar residues. 3 positions are modified to phosphoserine: Ser-618, Ser-640, and Ser-648. The span at 643–653 (IEVDDSDEDDI) shows a compositional bias: acidic residues. Over residues 655-679 (PTNSRADQRWSGTTSSKRMSQSQTA) the composition is skewed to polar residues. Lys-671 bears the N6-lactoyllysine mark. Phosphoserine is present on residues Ser-674, Ser-676, Ser-686, and Ser-699. Over residues 684 to 694 (FESDEDDDDDP) the composition is skewed to acidic residues.

It belongs to the MRE11/RAD32 family. Component of the MRN complex composed of two heterodimers RAD50 and MRE11 associated with a single NBN. The MRN complexes dimerize on DNA to form joined MRN-MRN oligomers required for DNA double-strand break repair. As part of the MRN complex, interacts with MCM9; the interaction recruits the complex to DNA repair sites. Component of the BASC complex, at least composed of BRCA1, MSH2, MSH6, MLH1, ATM, BLM, RAD50, MRE11 and NBN. Found in a complex with TERF2. Interacts with DCLRE1C/Artemis and DCLRE1B/Apollo. Interacts with ATF2. Interacts with EXD2. Interacts with MRNIP. Interacts with SAMHD1; leading to stimulate 3'-5' exonuclease activity. Interacts (when ubiquitinated) with UBQLN4 (via its UBA domain). Interacts with CYREN (via XLF motif). Interacts with GFI1; promoting methylation by PRMT1. Interacts with DYNLL1; inhibiting the activity of MRE11. Interacts with C1QBP and RAD50; interaction takes place in absence of DNA damage to form the MRC (MRE11-RAD50-C1QBP) complex that inhibits the activity of MRE11. Interacts with AGER/RAGE; AGER is recruited to DNA double-strand break sites where it enhances MRE11 endonuclease activity to promote DNA repair. Requires Mn(2+) as cofactor. In terms of processing, phosphorylated by ATM at Ser-674 and Ser-676 in response to DNA damage, promoting MRE11 activity: phosphorylation activates MRE11 by preventing the interaction between MRE11 and the C1QBP inhibitor. Phosphorylation at Ser-648 by PLK1 primes for phosphorylation at Ser-686 by CK2, inhibiting recruitment of the MRN complex to DNA damage sites. Asymmetric dimethylation by PRMT1 promotes MRE11 exonuclease activity. Post-translationally, lactylation at Lys-671 by CREBBP/CBP in response to DNA damage promotes DNA binding and MRE11 activity. In terms of processing, acetylated on lysine residues by KAT2A /GCN5. Ubiquitinated following DNA damage. Ubiquitination triggers interaction with UBQLN4, leading to MRE11 removal from chromatin and degradation by the proteasome. Ubiquitinated at Lys-339 and Lys-481 by RNF126 via 'Lys-27'- and 'Lys-29'-linked polyubiquitin chains, promoting the exonuclease activity of MRE11. Post-translationally, SUMOylated by PIAS1, stabilizing MRE11 on chromatin during end resection. DeSUMOylated by SENP3 following removal from DNA double-strand breaks (DSBs). In terms of processing, ufmylation at Lys-282 promotes MRE11 activity and is required for activation of the ATM and ATR kinases by the MRN complex.

It is found in the nucleus. The protein resides in the chromosome. The protein localises to the telomere. Interaction with SAMHD1 stimulates the double-strand-specific 3'-5' exonuclease activity. RBBP8/CtIP specifically promotes the endonuclease activity to clear protein-DNA adducts and generate clean double-strand break ends. DYNLL1-binding inhibits the activity of MRE11. MRE11 activity is inhibited by C1QBP: in absence of DNA damage, C1QBP interacts with unphosphorylated MRE11, preventing formation and activity of the MRN complex. Core component of the MRN complex, which plays a central role in double-strand break (DSB) repair, DNA recombination, maintenance of telomere integrity and meiosis. The MRN complex is involved in the repair of DNA double-strand breaks (DSBs) via homologous recombination (HR), an error-free mechanism which primarily occurs during S and G2 phases. The complex (1) mediates the end resection of damaged DNA, which generates proper single-stranded DNA, a key initial steps in HR, and is (2) required for the recruitment of other repair factors and efficient activation of ATM and ATR upon DNA damage. Within the MRN complex, MRE11 possesses both single-strand endonuclease activity and double-strand-specific 3'-5' exonuclease activity. After DSBs, MRE11 is loaded onto DSBs sites and cleaves DNA by cooperating with RBBP8/CtIP to initiate end resection. MRE11 first endonucleolytically cleaves the 5' strand at DNA DSB ends to prevent non-homologous end joining (NHEJ) and licence HR. It then generates a single-stranded DNA gap via 3' to 5' exonucleolytic degradation to create entry sites for EXO1- and DNA2-mediated 5' to 3' long-range resection, which is required for single-strand invasion and recombination. RBBP8/CtIP specifically promotes the endonuclease activity of MRE11 to clear protein-DNA adducts and generate clean double-strand break ends. MRE11 endonuclease activity is also enhanced by AGER/RAGE. The MRN complex is also required for DNA damage signaling via activation of the ATM and ATR kinases: the nuclease activity of MRE11 is not required to activate ATM and ATR. The MRN complex is also required for the processing of R-loops. The MRN complex is involved in the activation of the cGAS-STING pathway induced by DNA damage during tumorigenesis: the MRN complex acts by displacing CGAS from nucleosome sequestration, thereby activating it. In telomeres the MRN complex may modulate t-loop formation. The sequence is that of Double-strand break repair protein MRE11 from Mus musculus (Mouse).